The primary structure comprises 1014 residues: Klotho (1014 aa).

Residues 1 to 35 form the signal peptide; it reads MPASAPPRRPRPPPPSLSLSLLLVLLGLAGRRLRA. Residues 36 to 983 lie on the Extracellular side of the membrane; sequence EPGDGAQTWA…ECSFFHTRKP (948 aa). 2 glycosyl hydrolase-1 regions span residues 59–508 and 517–955; these read FQGT…KNGF and LEGT…SNGF. N-linked (GlcNAc...) asparagine glycans are attached at residues asparagine 161, asparagine 285, asparagine 346, asparagine 609, asparagine 614, and asparagine 696. The helical transmembrane segment at 984–1004 threads the bilayer; sequence LVAFIAFLFFAFIVSLSLIFY. Topologically, residues 1005–1014 are cytoplasmic; it reads YSKKGRRRYQ.

The protein belongs to the glycosyl hydrolase 1 family. Klotho subfamily. As to quaternary structure, homodimer. Interacts with FGF23 and FGFR1.

The protein localises to the cell membrane. It is found in the apical cell membrane. It localises to the secreted. The enzyme catalyses a beta-D-glucuronoside + H2O = D-glucuronate + an alcohol. In terms of biological role, may have weak glycosidase activity towards glucuronylated steroids. However, it lacks essential active site Glu residues at positions 241 and 874, suggesting it may be inactive as a glycosidase in vivo. May be involved in the regulation of calcium and phosphorus homeostasis by inhibiting the synthesis of active vitamin D. Essential factor for the specific interaction between FGF23 and FGFR1. The Klotho peptide generated by cleavage of the membrane-bound isoform may be an anti-aging circulating hormone which would extend life span by inhibiting insulin/IGF1 signaling. This Macaca fascicularis (Crab-eating macaque) protein is Klotho (KL).